The primary structure comprises 450 residues: Enolase (450 aa).

Q173 provides a ligand contact to (2R)-2-phosphoglycerate. Residue E215 is the Proton donor of the active site. D254, E308, and D335 together coordinate Mg(2+). Residues K360, R389, S390, and K411 each coordinate (2R)-2-phosphoglycerate. K360 serves as the catalytic Proton acceptor.

It belongs to the enolase family. Mg(2+) serves as cofactor.

Its subcellular location is the cytoplasm. It localises to the secreted. The protein localises to the cell surface. It catalyses the reaction (2R)-2-phosphoglycerate = phosphoenolpyruvate + H2O. The protein operates within carbohydrate degradation; glycolysis; pyruvate from D-glyceraldehyde 3-phosphate: step 4/5. In terms of biological role, catalyzes the reversible conversion of 2-phosphoglycerate (2-PG) into phosphoenolpyruvate (PEP). It is essential for the degradation of carbohydrates via glycolysis. The sequence is that of Enolase from Malacoplasma penetrans (strain HF-2) (Mycoplasma penetrans).